Reading from the N-terminus, the 502-residue chain is Maturase K (502 aa).

The protein belongs to the intron maturase 2 family. MatK subfamily.

The protein localises to the plastid. It localises to the chloroplast. Usually encoded in the trnK tRNA gene intron. Probably assists in splicing its own and other chloroplast group II introns. The chain is Maturase K from Ipomoea purpurea (Common morning glory).